A 132-amino-acid chain; its full sequence is Large ribosomal subunit protein bL17 (132 aa).

The protein belongs to the bacterial ribosomal protein bL17 family. In terms of assembly, part of the 50S ribosomal subunit. Contacts protein L32.

The chain is Large ribosomal subunit protein bL17 from Cellvibrio japonicus (strain Ueda107) (Pseudomonas fluorescens subsp. cellulosa).